Reading from the N-terminus, the 288-residue chain is 33 kDa chaperonin (288 aa).

2 disulfide bridges follow: Cys-235–Cys-237 and Cys-268–Cys-271.

Belongs to the HSP33 family. Under oxidizing conditions two disulfide bonds are formed involving the reactive cysteines. Under reducing conditions zinc is bound to the reactive cysteines and the protein is inactive.

It localises to the cytoplasm. In terms of biological role, redox regulated molecular chaperone. Protects both thermally unfolding and oxidatively damaged proteins from irreversible aggregation. Plays an important role in the bacterial defense system toward oxidative stress. The protein is 33 kDa chaperonin of Streptococcus suis (strain 98HAH33).